We begin with the raw amino-acid sequence, 167 residues long: Protein-lysine myristoyltransferase RtxC (167 aa).

Residues histidine 20 and aspartate 89 contribute to the active site.

This sequence belongs to the RTX toxin acyltransferase family.

Its subcellular location is the cytoplasm. The enzyme catalyses tetradecanoyl-[ACP] + L-lysyl-[protein] = N(6)-tetradecanoyl-L-lysyl-[protein] + holo-[ACP] + H(+). Its function is as follows. Protein-lysine myristoyltransferase that catalyzes myristoylation of the protoxin (RtxA) at two internal lysine residues, thereby converting it to the active toxin. The chain is Protein-lysine myristoyltransferase RtxC from Kingella kingae.